The chain runs to 375 residues: Flagellin (375 aa).

The protein belongs to the bacterial flagellin family.

The protein resides in the secreted. It localises to the bacterial flagellum. Flagellin is the subunit protein which polymerizes to form the filaments of bacterial flagella. Flagella are an important component in the invasiveness of B.bacilliformis. This is Flagellin from Bartonella bacilliformis.